A 351-amino-acid chain; its full sequence is Nicotinate-nucleotide--dimethylbenzimidazole phosphoribosyltransferase (351 aa).

Glutamate 318 (proton acceptor) is an active-site residue.

Belongs to the CobT family.

The catalysed reaction is 5,6-dimethylbenzimidazole + nicotinate beta-D-ribonucleotide = alpha-ribazole 5'-phosphate + nicotinate + H(+). It functions in the pathway nucleoside biosynthesis; alpha-ribazole biosynthesis; alpha-ribazole from 5,6-dimethylbenzimidazole: step 1/2. Its function is as follows. Catalyzes the synthesis of alpha-ribazole-5'-phosphate from nicotinate mononucleotide (NAMN) and 5,6-dimethylbenzimidazole (DMB). This Shewanella frigidimarina (strain NCIMB 400) protein is Nicotinate-nucleotide--dimethylbenzimidazole phosphoribosyltransferase.